Here is a 322-residue protein sequence, read N- to C-terminus: tRNA-dihydrouridine synthase B (322 aa).

FMN contacts are provided by residues 16 to 18 (PMA) and Gln-70. The active-site Proton donor is the Cys-100. Residues Lys-139, 200–202 (NGD), and 224–225 (GR) contribute to the FMN site.

This sequence belongs to the Dus family. DusB subfamily. FMN serves as cofactor.

It carries out the reaction a 5,6-dihydrouridine in tRNA + NAD(+) = a uridine in tRNA + NADH + H(+). The enzyme catalyses a 5,6-dihydrouridine in tRNA + NADP(+) = a uridine in tRNA + NADPH + H(+). Functionally, catalyzes the synthesis of 5,6-dihydrouridine (D), a modified base found in the D-loop of most tRNAs, via the reduction of the C5-C6 double bond in target uridines. The polypeptide is tRNA-dihydrouridine synthase B (Shewanella oneidensis (strain ATCC 700550 / JCM 31522 / CIP 106686 / LMG 19005 / NCIMB 14063 / MR-1)).